A 180-amino-acid chain; its full sequence is Large ribosomal subunit protein uL5 (180 aa).

Belongs to the universal ribosomal protein uL5 family. As to quaternary structure, part of the 50S ribosomal subunit; part of the 5S rRNA/L5/L18/L25 subcomplex. Contacts the 5S rRNA and the P site tRNA. Forms a bridge to the 30S subunit in the 70S ribosome.

This is one of the proteins that bind and probably mediate the attachment of the 5S RNA into the large ribosomal subunit, where it forms part of the central protuberance. In the 70S ribosome it contacts protein S13 of the 30S subunit (bridge B1b), connecting the 2 subunits; this bridge is implicated in subunit movement. Contacts the P site tRNA; the 5S rRNA and some of its associated proteins might help stabilize positioning of ribosome-bound tRNAs. This Acholeplasma laidlawii (strain PG-8A) protein is Large ribosomal subunit protein uL5.